A 312-amino-acid chain; its full sequence is Ribosomal protein L11 methyltransferase (312 aa).

Thr163, Gly184, Asp206, and Asn248 together coordinate S-adenosyl-L-methionine.

The protein belongs to the methyltransferase superfamily. PrmA family.

Its subcellular location is the cytoplasm. The enzyme catalyses L-lysyl-[protein] + 3 S-adenosyl-L-methionine = N(6),N(6),N(6)-trimethyl-L-lysyl-[protein] + 3 S-adenosyl-L-homocysteine + 3 H(+). Functionally, methylates ribosomal protein L11. The polypeptide is Ribosomal protein L11 methyltransferase (Clostridium botulinum (strain Loch Maree / Type A3)).